The chain runs to 206 residues: Halorhodopsin (206 aa).

Residues 1-15 (IALAGLSILLFVYMG) traverse the membrane as a helical segment. At 16–21 (RNVEDP) the chain is on the cytoplasmic side. Residues 22 to 45 (RAQLIFVATLMVPLVSISSYTGLV) form a helical membrane-spanning segment. The Extracellular portion of the chain corresponds to 46–75 (SGLTVGFLEMPAGHALAGMGAGPEGGVFTP). Residues 76–97 (WGRYLTWAFSTPMILIALGLLA) form a helical membrane-spanning segment. The Cytoplasmic portion of the chain corresponds to 98 to 100 (GSN). The helical transmembrane segment at 101–124 (MSKLFTAVVADVGMCITGLAAALT) threads the bilayer. Residues 125–127 (TSS) lie on the Extracellular side of the membrane. Residues 128–150 (YLLRWVWYGISCAFFVVVLYILL) form a helical membrane-spanning segment. The Cytoplasmic segment spans residues 151–162 (AEWAKDAEVAGT). Residues 163 to 186 (ADIFNTLKVLTVVLWLGYPIFWAL) form a helical membrane-spanning segment. The Extracellular portion of the chain corresponds to 187 to 195 (GAEGLAVLD). The helical transmembrane segment at 196-206 (IAITSWAYSGM) threads the bilayer.

The protein belongs to the archaeal/bacterial/fungal opsin family.

It localises to the cell membrane. In terms of biological role, light-driven chloride pump. The protein is Halorhodopsin (hop) of Halobacterium halobium (strain mex).